The chain runs to 122 residues: Small ribosomal subunit protein uS13 (122 aa).

The disordered stretch occupies residues 93-122 (RLSLPVRGQRTKTNSRTRKGKRKTVAGKKK). Over residues 101–122 (QRTKTNSRTRKGKRKTVAGKKK) the composition is skewed to basic residues.

It belongs to the universal ribosomal protein uS13 family. Part of the 30S ribosomal subunit. Forms a loose heterodimer with protein S19. Forms two bridges to the 50S subunit in the 70S ribosome.

Located at the top of the head of the 30S subunit, it contacts several helices of the 16S rRNA. In the 70S ribosome it contacts the 23S rRNA (bridge B1a) and protein L5 of the 50S subunit (bridge B1b), connecting the 2 subunits; these bridges are implicated in subunit movement. Contacts the tRNAs in the A and P-sites. In Chlamydia abortus (strain DSM 27085 / S26/3) (Chlamydophila abortus), this protein is Small ribosomal subunit protein uS13.